The following is a 264-amino-acid chain: Major prion protein 1 (264 aa).

The signal sequence occupies residues 1-24; sequence MVKSHIGSWILVLFVAMWSDVALC. An interaction with GRB2, ERI3 and SYN1 region spans residues 25–241; the sequence is KKRPKPGGGW…ESEAYYQRGA (217 aa). Positions 28 to 118 are disordered; it reads PKPGGGWNTG…QWNKPSKPKT (91 aa). 6 consecutive repeat copies span residues 54–62, 63–70, 71–78, 79–86, 87–94, and 95–103. The tract at residues 54–103 is 6 X 8 AA tandem repeats of P-H-G-G-G-W-G-Q; that stretch reads SQGGGGWGQPHGGGWGQPHGGGWGQPHGGGWGQPHGGGWGQPHGGGGWGQ. The span at 55-107 shows a compositional bias: gly residues; it reads QGGGGWGQPHGGGWGQPHGGGWGQPHGGGWGQPHGGGWGQPHGGGGWGQGGTH. Residues His72, Gly73, Gly74, His80, Gly81, Gly82, His88, Gly89, Gly90, His96, Gly98, and Gly99 each coordinate Cu(2+). A disulfide bond links Cys190 and Cys225. 2 N-linked (GlcNAc...) asparagine glycosylation sites follow: Asn192 and Asn208. Ala241 carries GPI-anchor amidated alanine lipidation. The propeptide at 242–264 is removed in mature form; the sequence is SVILFSSPPVILLISFLIFLIVG.

This sequence belongs to the prion family. As to quaternary structure, monomer and homodimer. Has a tendency to aggregate into amyloid fibrils containing a cross-beta spine, formed by a steric zipper of superposed beta-strands. Soluble oligomers may represent an intermediate stage on the path to fibril formation. Copper binding may promote oligomerization. Interacts with GRB2, APP, ERI3/PRNPIP and SYN1. Mislocalized cytosolically exposed PrP interacts with MGRN1; this interaction alters MGRN1 subcellular location and causes lysosomal enlargement. Interacts with KIAA1191.

The protein localises to the cell membrane. The protein resides in the golgi apparatus. In terms of biological role, its primary physiological function is unclear. Has cytoprotective activity against internal or environmental stresses. May play a role in neuronal development and synaptic plasticity. May be required for neuronal myelin sheath maintenance. May play a role in iron uptake and iron homeostasis. Soluble oligomers are toxic to cultured neuroblastoma cells and induce apoptosis (in vitro). Association with GPC1 (via its heparan sulfate chains) targets PRNP to lipid rafts. Also provides Cu(2+) or Zn(2+) for the ascorbate-mediated GPC1 deaminase degradation of its heparan sulfate side chains. In Tragelaphus strepsiceros (Greater kudu), this protein is Major prion protein 1.